A 232-amino-acid polypeptide reads, in one-letter code: Proteasome subunit alpha (232 aa).

Belongs to the peptidase T1A family. In terms of assembly, the 20S proteasome core is composed of 14 alpha and 14 beta subunits that assemble into four stacked heptameric rings, resulting in a barrel-shaped structure. The two inner rings, each composed of seven catalytic beta subunits, are sandwiched by two outer rings, each composed of seven alpha subunits. The catalytic chamber with the active sites is on the inside of the barrel. Has a gated structure, the ends of the cylinder being occluded by the N-termini of the alpha-subunits. Is capped by the proteasome-associated ATPase, ARC.

The protein resides in the cytoplasm. The protein operates within protein degradation; proteasomal Pup-dependent pathway. The formation of the proteasomal ATPase ARC-20S proteasome complex, likely via the docking of the C-termini of ARC into the intersubunit pockets in the alpha-rings, may trigger opening of the gate for substrate entry. Interconversion between the open-gate and close-gate conformations leads to a dynamic regulation of the 20S proteasome proteolysis activity. In terms of biological role, component of the proteasome core, a large protease complex with broad specificity involved in protein degradation. The polypeptide is Proteasome subunit alpha (Acidimicrobium ferrooxidans (strain DSM 10331 / JCM 15462 / NBRC 103882 / ICP)).